We begin with the raw amino-acid sequence, 424 residues long: Protein CapL (424 aa).

Belongs to the UDP-glucose/GDP-mannose dehydrogenase family.

The protein operates within capsule biogenesis; capsule polysaccharide biosynthesis. In terms of biological role, required for the biosynthesis of type 1 capsular polysaccharide. In Staphylococcus aureus, this protein is Protein CapL (capL).